The primary structure comprises 267 residues: Glutamate 5-kinase (267 aa).

Lys-17 contributes to the ATP binding site. Positions 57, 144, and 156 each coordinate substrate. ATP contacts are provided by residues 176-177 (SD) and 218-224 (TGGMATK).

Belongs to the glutamate 5-kinase family.

It localises to the cytoplasm. The catalysed reaction is L-glutamate + ATP = L-glutamyl 5-phosphate + ADP. The protein operates within amino-acid biosynthesis; L-proline biosynthesis; L-glutamate 5-semialdehyde from L-glutamate: step 1/2. Catalyzes the transfer of a phosphate group to glutamate to form L-glutamate 5-phosphate. This Clostridium acetobutylicum (strain ATCC 824 / DSM 792 / JCM 1419 / IAM 19013 / LMG 5710 / NBRC 13948 / NRRL B-527 / VKM B-1787 / 2291 / W) protein is Glutamate 5-kinase.